A 1401-amino-acid polypeptide reads, in one-letter code: MNQEVMNLFNPQVPAQTFDSIRISIASPEKILSWSYGEIKKPETINYRTFKPERDGLFCARIFGPIKDYECLCGKYKRMKYKGIICEKCGVEVTLSRVRRERMGHIELAAPVAHIWFLKSLPSRIATLLDMTLKDIERVLYFENYIVTEPGLTSLKENQLLSEEEYMIAVDEFGEDQFTAMIGAEAIYEMLASMNLEKIAGDLRSEMAETTSDLKQKKLMKRLKIVENFMESGNRPEWMIMKVVPVIPPDLRPLVPLDGGRFATSDLNDLYRRVINRNNRLKRLIELRAPGIIIRNEKRMLQESVDALFDNGRRGRVITGANKRPLKSLSDMLKGKQGRFRQNLLGKRVDYSGRSVIVTGPELKLHQCGLPKKMALELFKPFIYARLDAKGYSSTVKQAKKLVEKEKPEVWDILDEVIREHPVLLNRAPTLHRLGIQAFEPILVEGKAIQLHPLVCTAFNADFDGDQMAVHVPLSLEAQLEARVLMMSTNNILHPANGAPIIVPSQDMVLGLYYLSIMNQNEPGEGMAFSDMGELHHALETKAVTLHAKIRGRYKTVDAEGNPVSKIYETTPGRMIIGELLPKNPNVPFETCNQEMTKKNISKMIDTVYRHCGQKDTVIFCDRIMQLGFSHACRAGISFGKDDMVIPDTKVKIVGDTEALVKEYEQQYNDGLITQGEKYNKVVDAWGKATEKVAEEMMARIKAVEFDDSGRQKPMNSIYMMSHSGARGSPNQMRQLGGMRGLMAKPSGEIIETPIISNFKEGLTVNEYFNSTHGARKGLADTALKTANSGYLTRRLVDVAQDCIVTHTDCGTDKGLTMTAIVDAGQVVASIGQRILGRTALDNIDNPVTGERIVDAGKMILEPDVVAIEKAGIQSVRIRSALTCEIQTGVCGVCYGRDLARGTPVNMGEAVGVIAAQSIGEPGTQLTMRTFHLGGTATVVDQSFLEASYEGTVQIKNRNMLRNSDGVLVAMGRNMAIQILDERGVERSSQRVAYGSKIFVDDGDKVKRGQRFAEWDPYTRPMMTEVEGTVHFEDVVDGISVLESTDESTGITKRQVIDWRSTPRGTDLKPAIVIKDKNGNIAKLARGGEARFMLSVDAILSVEPGQKVSQGDVLARSPLESAKTKDITGGLPRVAELFEARRPKDHAIIAEIDGTIRFGRDYKNKRRVMIEPAEDGVEPVEYLIPKGKPFHLQDGDYIEKGDYILDGNPAPHDILAIKGVEALASYLVNEIQEVYRLQGVVINDKHIEVIVRQMLQKVEITDAGDSTYIVGDNVDRIELEDVNDSLLAEGKKPAFGEPVLLGITKASLQTPSFISAASFQETTKVLTEAAVAGKTDNLQGLKENVIVGRLIPAGTGGTMTQIRRIATARDELILEERRKGTGAESATPMLADMANDPAAAE.

Zn(2+) is bound by residues Cys-71, Cys-73, Cys-86, and Cys-89. Mg(2+) is bound by residues Asp-462, Asp-464, and Asp-466. Zn(2+) is bound by residues Cys-810, Cys-884, Cys-891, and Cys-894. A disordered region spans residues 1377-1401; the sequence is RRKGTGAESATPMLADMANDPAAAE.

It belongs to the RNA polymerase beta' chain family. In terms of assembly, the RNAP catalytic core consists of 2 alpha, 1 beta, 1 beta' and 1 omega subunit. When a sigma factor is associated with the core the holoenzyme is formed, which can initiate transcription. Requires Mg(2+) as cofactor. Zn(2+) is required as a cofactor.

The catalysed reaction is RNA(n) + a ribonucleoside 5'-triphosphate = RNA(n+1) + diphosphate. DNA-dependent RNA polymerase catalyzes the transcription of DNA into RNA using the four ribonucleoside triphosphates as substrates. This chain is DNA-directed RNA polymerase subunit beta', found in Rhizobium meliloti (strain 1021) (Ensifer meliloti).